The sequence spans 239 residues: Small ribosomal subunit protein uS3c (239 aa).

One can recognise a KH type-2 domain in the interval 43–139 (IKNYIQKNRK…RLNISIEKVK (97 aa)). Residues 50 to 80 (NRKKGSNRKIESDSSSEVITHNRKTDSGSSS) form a disordered region.

This sequence belongs to the universal ribosomal protein uS3 family. In terms of assembly, part of the 30S ribosomal subunit.

It localises to the plastid. The protein resides in the chloroplast. The sequence is that of Small ribosomal subunit protein uS3c (rps3) from Agrostis stolonifera (Creeping bentgrass).